We begin with the raw amino-acid sequence, 319 residues long: Malate dehydrogenase (319 aa).

NAD(+) is bound by residues G10–G15 and D34. 2 residues coordinate substrate: R83 and R89. Residues N96 and I119–N121 contribute to the NAD(+) site. N121 and R152 together coordinate substrate. H176 functions as the Proton acceptor in the catalytic mechanism.

This sequence belongs to the LDH/MDH superfamily. MDH type 3 family.

The catalysed reaction is (S)-malate + NAD(+) = oxaloacetate + NADH + H(+). Catalyzes the reversible oxidation of malate to oxaloacetate. The chain is Malate dehydrogenase from Paramagnetospirillum magneticum (strain ATCC 700264 / AMB-1) (Magnetospirillum magneticum).